A 436-amino-acid chain; its full sequence is 3-ketoacyl-CoA thiolase (436 aa).

The Acyl-thioester intermediate role is filled by Cys-99. Catalysis depends on proton acceptor residues His-392 and Cys-422.

The protein belongs to the thiolase-like superfamily. Thiolase family. In terms of assembly, heterotetramer of two alpha chains (FadJ) and two beta chains (FadI).

Its subcellular location is the cytoplasm. It carries out the reaction an acyl-CoA + acetyl-CoA = a 3-oxoacyl-CoA + CoA. Its pathway is lipid metabolism; fatty acid beta-oxidation. In terms of biological role, catalyzes the final step of fatty acid oxidation in which acetyl-CoA is released and the CoA ester of a fatty acid two carbons shorter is formed. In Escherichia coli O127:H6 (strain E2348/69 / EPEC), this protein is 3-ketoacyl-CoA thiolase.